Consider the following 356-residue polypeptide: Tyrosine recombinase XerS (356 aa).

Residues 16 to 121 (IMPWYVLDYY…ALSSLYKYLT (106 aa)) enclose the Core-binding (CB) domain. Positions 169-354 (AFLDYVDKEY…VNDEQKNALD (186 aa)) constitute a Tyr recombinase domain. Active-site residues include arginine 210, lysine 234, histidine 306, arginine 309, and histidine 332. Tyrosine 341 (O-(3'-phospho-DNA)-tyrosine intermediate) is an active-site residue.

It belongs to the 'phage' integrase family. XerS subfamily.

The protein localises to the cytoplasm. Its activity is regulated as follows. FtsK is required for recombination. In terms of biological role, site-specific tyrosine recombinase, which acts by catalyzing the cutting and rejoining of the recombining DNA molecules. Essential to convert dimers of the bacterial chromosome into monomers to permit their segregation at cell division. In Streptococcus pyogenes serotype M2 (strain MGAS10270), this protein is Tyrosine recombinase XerS.